The chain runs to 131 residues: Protein ApaG (131 aa).

One can recognise an ApaG domain in the interval 7–131; the sequence is PVKPYDLTVS…FLLAMPRTLH (125 aa).

This Bordetella bronchiseptica (strain ATCC BAA-588 / NCTC 13252 / RB50) (Alcaligenes bronchisepticus) protein is Protein ApaG.